We begin with the raw amino-acid sequence, 212 residues long: Putative tyrosine-protein phosphatase R622 (212 aa).

A Tyrosine-protein phosphatase domain is found at 9–191 (KISQVTNNIF…LQGYQSKKEN (183 aa)). Cysteine 135 (phosphocysteine intermediate) is an active-site residue.

Belongs to the protein-tyrosine phosphatase family. Non-receptor class dual specificity subfamily.

The enzyme catalyses O-phospho-L-tyrosyl-[protein] + H2O = L-tyrosyl-[protein] + phosphate. The chain is Putative tyrosine-protein phosphatase R622 from Acanthamoeba polyphaga mimivirus (APMV).